Reading from the N-terminus, the 215-residue chain is Putative serine/threonine-protein kinase YrzF (215 aa).

Positions 27-215 (SEELTLIGKG…HFAQRKRKYS (189 aa)) constitute a Protein kinase domain. ATP is bound by residues 33 to 41 (IGKGRSAYV) and lysine 54. Residue aspartate 135 is the Proton acceptor of the active site.

This sequence belongs to the protein kinase superfamily. Ser/Thr protein kinase family.

It carries out the reaction L-seryl-[protein] + ATP = O-phospho-L-seryl-[protein] + ADP + H(+). It catalyses the reaction L-threonyl-[protein] + ATP = O-phospho-L-threonyl-[protein] + ADP + H(+). In Bacillus subtilis (strain 168), this protein is Putative serine/threonine-protein kinase YrzF (yrzF).